A 352-amino-acid polypeptide reads, in one-letter code: Quinolinate synthase (352 aa).

His48 and Ser69 together coordinate iminosuccinate. Cys114 serves as a coordination point for [4Fe-4S] cluster. Iminosuccinate is bound by residues 140–142 (YAN) and Ser157. Cys201 contributes to the [4Fe-4S] cluster binding site. Residues 227–229 (HPE) and Thr244 each bind iminosuccinate. Cys298 contacts [4Fe-4S] cluster.

The protein belongs to the quinolinate synthase family. Type 1 subfamily. [4Fe-4S] cluster is required as a cofactor.

Its subcellular location is the cytoplasm. The catalysed reaction is iminosuccinate + dihydroxyacetone phosphate = quinolinate + phosphate + 2 H2O + H(+). The protein operates within cofactor biosynthesis; NAD(+) biosynthesis; quinolinate from iminoaspartate: step 1/1. In terms of biological role, catalyzes the condensation of iminoaspartate with dihydroxyacetone phosphate to form quinolinate. The polypeptide is Quinolinate synthase (Pseudomonas entomophila (strain L48)).